The chain runs to 1692 residues: MALLNVISENPLTLQPGQVIAFDHLANGEHWQWALGTVVSSDKHVVVVEQWAVNEGSCETLKHNISSEIQKEMKRMGVFQEQLSSARDKLAAIRSENEDRVSAARAVFEDAKARVASVDEVHMREVTSQACPSPVAVEVLKSVLALAQNDPTVTNCSTWDDIRMEYRRPNAIADFISADITGKTYPNAEEICSSLNEQRLSSLAASRDSEAISSLHHWVLSALAYQEAYCRLTTDTRVQEQNDAIANCIAGMKGCRLKVMKLKEELERGGTPTFGGQLTSFTKTSVQLKAPLSSVISIVGVDPSAQDCVLTDDEVGLILDKAEQTRLQINDHFSHLSNSYMEAMAELHCLSMYTSELEERRLNLQERFVFSLFTNAGKTNAPRRERIETDVGLRSVEAPRGDSANNIKDLQEIIKELSSHDERWMYRNEPTVTTKHRKSYPGREWSKVVERKPEELLSTFRTEQAAACHVPEDAIRNIEFTATSEKLQVSFDVQHPVKQTAAEINKRLQEFPSRGMDRMLCDVDQPKKGLDRAIVEVCRAFDLREHAFRGMTFDKFIEEVAMKGRVGDKDAYESEIGDLLMLLDKIHNENRSLQYTLEKSAEEFRRQTASTMREQESLRQRNGELHAEIGRLRDLVEKLRDLADNQASELELLKLQKTQANQIRAQRNLSTFRGDDTAEPVYCVTLDELREQTEHCDQVERELERQREQCQNLLNAQDDLLAELSGVSEEKEKLEAECERLEAELRQMEEKSRLSEQGLSEMTQRLEEKQAEIEGLLENLEQLDEQLEALRAAEKSAQAHIEARDREISDLQQRLEGEIDDHIKTTALLEELRKHYNNLEELFDKQEAELMAYREKRQNAHKVRSLEPTLRPIGTQTKPFQEMVSADEISSEPLLSVTLDEYNDHMHRSNQFQQENDLLRQQLQQANDERENLHDRLEQLMAENQSLSEQLHNMHEELEREERDRSGVTLQNERLAEEIQRKTAENEQLVLENNKSRSDIRNLNVQVQRLMEELELKAAENEKLAEELELKAAENEKLAEELELKVAENEKLAEELELKVAENEKLAEELELKAAENEKLAEELELKAAENEKLAEELELKAAENEKLAEELELKAAENEKLAEELELKAAENEKLAEELELKAAENEKLAEELELKAAENEKLAEELELKVAENEKLAEELELKAAENEKLAEELELKVAENEKLAEELELKAAENEKLAEELELKAAENEKLAEELELKAAENEKLAEELELKAAENEKLAEELELKVAENEKLAEELELKAAENEKLAEELELKVAENEKLAEELELKAAENEKLAEELELKVAENEKLAEELELKAAENEKLAEELELKVAENEKLAEELELKAAENEKLAEELELKAAENEKLAEELELKAAENEKLAEELELKAAENEKLAEELELKAAENEKLAEELELKVAENEKLAEELELKAAENEKLAEELELKVAENEKLAEELELKAAENEKLAEELELKAAENEKLAEELELKAAENEKLAEELELKVAENKRLAEEVTQRLSEKELLAEDTSARLLEADSANSALQCKVKHLEEKLTLLSSEKETALATLEAEIVDLLTQLKGLNGTNSALESLCASKEKELVFLREHCELWTDPTTKKEKVITRHVKVFDGNEWMKLITDRPEALMSAFVIDAGNACHVPGDQIHEVSFLNNKEKH.

Coiled coils occupy residues 613–657, 684–864, and 903–1607; these read REQE…KLQK, VTLD…HKVR, and NDHM…SALE. Tandem repeats lie at residues 1012-1025, 1026-1039, 1040-1053, 1054-1067, 1068-1081, 1082-1095, 1096-1109, 1110-1123, 1124-1137, 1138-1151, 1152-1165, 1166-1179, 1180-1193, 1194-1207, 1208-1221, 1222-1235, 1236-1249, 1250-1263, 1264-1277, 1278-1291, 1292-1305, 1306-1319, 1320-1333, 1334-1347, 1348-1361, 1362-1375, 1376-1389, 1390-1403, 1404-1417, 1418-1431, 1432-1445, 1446-1459, 1460-1473, 1474-1487, 1488-1501, 1502-1515, and 1516-1529. Positions 1012–1529 are 37 X 14 AA tandem repeats of E-E-L-E-L-K-[VA]-A-E-N-E-K-L-A; sequence EELELKAAEN…LKVAENKRLA (518 aa).

It is found in the cell projection. Its subcellular location is the cilium. The protein localises to the flagellum. Its function is as follows. A component of FAZ filament that is required for correct FAZ assembly and attachment. Not essential for new flagellum growth. The chain is Flagellar attachment zone protein 1 from Trypanosoma brucei brucei (strain 927/4 GUTat10.1).